The following is a 65-amino-acid chain: Large ribosomal subunit protein bL35 (65 aa).

The disordered stretch occupies residues 24–48; sequence RRKAGKSHLLEHKSSDKKRSMSKTT. The segment covering 31–42 has biased composition (basic and acidic residues); it reads HLLEHKSSDKKR.

It belongs to the bacterial ribosomal protein bL35 family.

The chain is Large ribosomal subunit protein bL35 from Nostoc punctiforme (strain ATCC 29133 / PCC 73102).